The following is a 96-amino-acid chain: Putative septation protein SpoVG (96 aa).

This sequence belongs to the SpoVG family.

In terms of biological role, could be involved in septation. In Geobacillus sp. (strain WCH70), this protein is Putative septation protein SpoVG.